Here is an 840-residue protein sequence, read N- to C-terminus: Mechanosensitive ion channel protein Msy2 (840 aa).

The Cytoplasmic portion of the chain corresponds to 1–68 (MNEHRREPHR…WFNNLSFITR (68 aa)). Residues 69 to 89 (WITIWFPLAGALVIPLAVGVS) form a helical membrane-spanning segment. The Lumenal segment spans residues 90–100 (PYPNAKLGGVR). Residues 101 to 121 (IFWIFVWLEVAWGGFWVSRVI) traverse the membrane as a helical segment. Topologically, residues 122–126 (ARLLP) are cytoplasmic. Residues 127–147 (YILYPLMGILPFTMYKYTVIL) traverse the membrane as a helical segment. Topologically, residues 148 to 151 (TALE) are lumenal. The chain crosses the membrane as a helical span at residues 152–172 (MPLAIFFCSIVCVCTFSPIMI). Residues 173 to 225 (GKGNFTSTTVTTTTSATATPTASASSNAVESVFVTKTAASVPSWIKVITKILG) are Cytoplasmic-facing. The chain crosses the membrane as a helical span at residues 226 to 246 (AAVVTSIVLLLEKIFLHFIGF). Residues 247–449 (HYHEVQYQYR…LALGKLDRVG (203 aa)) are Lumenal-facing. An EF-hand domain is found at 392 to 427 (IPDDEINDIFHILDNDYSRTVTLDEMEQFTREISIE). Residues 450–491 (LGVVGIIAVLTFISFLDTSFATILAAFGTTLLSLSFVFSTSA) form a helical membrane-spanning segment. Over 492 to 840 (QELMSSIIFL…SQNMDGQIQY (349 aa)) the chain is Cytoplasmic. Disordered regions lie at residues 677–730 (EYSK…KRED) and 775–819 (ESNG…NTQA). The span at 688–700 (SDISSTASSNSLS) shows a compositional bias: low complexity. The segment covering 708-730 (SESRNYHTHDEDNSSDDNHKRED) has biased composition (basic and acidic residues). Positions 776–819 (SNGNANGDNTATNSQGATDNGQTTTNTTQNNVDNTQATTDNTQA) are enriched in low complexity.

It belongs to the MscS (TC 1.A.23) family.

Its subcellular location is the endoplasmic reticulum membrane. Functionally, regulates intracellular calcium levels and cell volume for survival in response to hypo-osmotic shock. Involved in maintaining vacuole integrity and protecting the nuclear envelope upon hypo-osmotic shock. This is Mechanosensitive ion channel protein Msy2 from Schizosaccharomyces pombe (strain 972 / ATCC 24843) (Fission yeast).